The chain runs to 1207 residues: Disease resistance protein RPP2B (1207 aa).

Residues 15 to 180 (CEFDVFVSFR…EIVKNTFRML (166 aa)) enclose the TIR domain. The active site involves glutamate 89. Residues 201–445 (ELEKLLMFDN…FLDIACFFRS (245 aa)) enclose the NB-ARC domain. LRR repeat units follow at residues 607 to 630 (PKEL…EKNT), 653 to 676 (AKNL…VKQM), 677 to 699 (NELI…GFKI), 720 to 743 (SESI…IESL), 744 to 767 (HSLI…LYKL), 769 to 791 (SLQE…KEKM), 792 to 815 (ECLE…CLSN), 840 to 862 (NSFL…KFSS), and 863 to 886 (LRSL…IEKL).

It belongs to the disease resistance TIR-NB-LRR family.

The catalysed reaction is NAD(+) + H2O = ADP-D-ribose + nicotinamide + H(+). In terms of biological role, disease resistance protein that cooperates with RPP2A to confer resistance to Hyaloperonospora parasitica isolate Cala2. In Arabidopsis thaliana (Mouse-ear cress), this protein is Disease resistance protein RPP2B.